The sequence spans 104 residues: L-rhamnose mutarotase (104 aa).

Substrate is bound at residue Tyr-18. His-22 acts as the Proton donor in catalysis. Substrate-binding positions include Tyr-41 and 76–77 (WW).

The protein belongs to the rhamnose mutarotase family. In terms of assembly, homodimer.

Its subcellular location is the cytoplasm. The catalysed reaction is alpha-L-rhamnose = beta-L-rhamnose. Its pathway is carbohydrate metabolism; L-rhamnose metabolism. Its function is as follows. Involved in the anomeric conversion of L-rhamnose. The sequence is that of L-rhamnose mutarotase from Rhizobium meliloti (strain 1021) (Ensifer meliloti).